Consider the following 257-residue polypeptide: tRNA pseudouridine synthase A (257 aa).

Residue Asp53 is the Nucleophile of the active site. Residue Tyr111 participates in substrate binding.

It belongs to the tRNA pseudouridine synthase TruA family. As to quaternary structure, homodimer.

It carries out the reaction uridine(38/39/40) in tRNA = pseudouridine(38/39/40) in tRNA. In terms of biological role, formation of pseudouridine at positions 38, 39 and 40 in the anticodon stem and loop of transfer RNAs. This is tRNA pseudouridine synthase A from Xanthomonas euvesicatoria pv. vesicatoria (strain 85-10) (Xanthomonas campestris pv. vesicatoria).